We begin with the raw amino-acid sequence, 138 residues long: Ergosterol biosynthetic protein 28 (138 aa).

Residues 17-33 form a helical membrane-spanning segment; that stretch reads LPYWLLFISVVSIFNSV. N40 is a glycosylation site (N-linked (GlcNAc...) asparagine). The next 3 membrane-spanning stretches (helical) occupy residues 56 to 75, 87 to 107, and 114 to 131; these read LSAR…RFYG, LTQF…LYFG, and GLSG…WMYL.

The protein belongs to the ERG28 family. In terms of assembly, heterotetramer of ERG25, ERG26, ERG27 and ERG28. ERG28 acts as a scaffold to tether ERG27 and other 4,4-demethylation-related enzymes, forming a demethylation enzyme complex, in the endoplasmic reticulum. Interacts with ERG25, ERG26 and ERG27. Also interacts with ERG1, ERG3, ERG5, ERG6 and ERG11.

The protein localises to the endoplasmic reticulum membrane. Its function is as follows. Part of the third module of ergosterol biosynthesis pathway that includes the late steps of the pathway. ERG28 has a role as a scaffold to help anchor the catalytic components of the C-4 demethylation complex ERG25, ERG26 and ERG27 to the endoplasmic reticulum. The third module or late pathway involves the ergosterol synthesis itself through consecutive reactions that mainly occur in the endoplasmic reticulum (ER) membrane. Firstly, the squalene synthase ERG9 catalyzes the condensation of 2 farnesyl pyrophosphate moieties to form squalene, which is the precursor of all steroids. Squalene synthase is crucial for balancing the incorporation of farnesyl diphosphate (FPP) into sterol and nonsterol isoprene synthesis. Secondly, the squalene epoxidase ERG1 catalyzes the stereospecific oxidation of squalene to (S)-2,3-epoxysqualene, which is considered to be a rate-limiting enzyme in steroid biosynthesis. Then, the lanosterol synthase ERG7 catalyzes the cyclization of (S)-2,3 oxidosqualene to lanosterol, a reaction that forms the sterol core. In the next steps, lanosterol is transformed to zymosterol through a complex process involving various demethylation, reduction and desaturation reactions. The lanosterol 14-alpha-demethylase ERG11 (also known as CYP51) catalyzes C14-demethylation of lanosterol to produce 4,4'-dimethyl cholesta-8,14,24-triene-3-beta-ol, which is critical for ergosterol biosynthesis. The C-14 reductase ERG24 reduces the C14=C15 double bond of 4,4-dimethyl-cholesta-8,14,24-trienol to produce 4,4-dimethyl-cholesta-8,24-dienol. 4,4-dimethyl-cholesta-8,24-dienol is substrate of the C-4 demethylation complex ERG25-ERG26-ERG27 in which ERG25 catalyzes the three-step monooxygenation required for the demethylation of 4,4-dimethyl and 4alpha-methylsterols, ERG26 catalyzes the oxidative decarboxylation that results in a reduction of the 3-beta-hydroxy group at the C-3 carbon to an oxo group, and ERG27 is responsible for the reduction of the keto group on the C-3. ERG28 has a role as a scaffold to help anchor ERG25, ERG26 and ERG27 to the endoplasmic reticulum and ERG29 regulates the activity of the iron-containing C4-methylsterol oxidase ERG25. Then, the sterol 24-C-methyltransferase ERG6 catalyzes the methyl transfer from S-adenosyl-methionine to the C-24 of zymosterol to form fecosterol. The C-8 sterol isomerase ERG2 catalyzes the reaction which results in unsaturation at C-7 in the B ring of sterols and thus converts fecosterol to episterol. The sterol-C5-desaturase ERG3 then catalyzes the introduction of a C-5 double bond in the B ring to produce 5-dehydroepisterol. The C-22 sterol desaturase ERG5 further converts 5-dehydroepisterol into ergosta-5,7,22,24(28)-tetraen-3beta-ol by forming the C-22(23) double bond in the sterol side chain. Finally, ergosta-5,7,22,24(28)-tetraen-3beta-ol is substrate of the C-24(28) sterol reductase ERG4 to produce ergosterol. The protein is Ergosterol biosynthetic protein 28 of Candida albicans (strain SC5314 / ATCC MYA-2876) (Yeast).